A 316-amino-acid polypeptide reads, in one-letter code: Probable protein-L-isoaspartate O-methyltransferase (316 aa).

Residues 103-106 (ATIS), H111, S136, 157-158 (EH), 187-188 (DG), T263, and Q268 contribute to the S-adenosyl-L-homocysteine site. The active site involves S106.

It belongs to the methyltransferase superfamily. L-isoaspartyl/D-aspartyl protein methyltransferase family.

The protein resides in the cytoplasm. It is found in the cytosol. The enzyme catalyses [protein]-L-isoaspartate + S-adenosyl-L-methionine = [protein]-L-isoaspartate alpha-methyl ester + S-adenosyl-L-homocysteine. Functionally, initiates the repair of damaged proteins by catalyzing methyl esterification of L-isoaspartyl and D-aspartyl residues produced by spontaneous isomerization and racemization of L-aspartyl and L-asparaginyl residues in aging peptides and proteins. The chain is Probable protein-L-isoaspartate O-methyltransferase (pcmA) from Dictyostelium discoideum (Social amoeba).